A 340-amino-acid polypeptide reads, in one-letter code: MTPIVRFESVTKTFSSGKKTLTAVDAVDLTIERGEIFGVIGYSGAGKSTLVRLINGLERPTSGRVVVDDVDITALSESKLRHVRAKIGMIFQQFNLFRSRTVAGNVAYPLVVAGWPRQKRRERVAELLEFVGLSDKARAYPDQLSGGQKQRVGIARALATSPDLLLADESTSALDPETTQDVLRLLRKVNRELGVTIVVITHEMDVVRAVADRVAVLAEGRVVELGTVFDVFSEPQAPASKSFVSTILRNRPEPADLERLRSRFGGRIVTADVRDGSRIGDVLSDAGGHGVRFEIVYGGITTLQDRSFGSLTLELVGPDDGVDDVIRRLRTVTDVEEVQA.

The ABC transporter domain occupies 5–244; that stretch reads VRFESVTKTF…PQAPASKSFV (240 aa). 41-48 is an ATP binding site; sequence GYSGAGKS.

The protein belongs to the ABC transporter superfamily. Methionine importer (TC 3.A.1.24) family. The complex is composed of two ATP-binding proteins (MetN), two transmembrane proteins (MetI) and a solute-binding protein (MetQ).

It localises to the cell membrane. It carries out the reaction L-methionine(out) + ATP + H2O = L-methionine(in) + ADP + phosphate + H(+). The enzyme catalyses D-methionine(out) + ATP + H2O = D-methionine(in) + ADP + phosphate + H(+). In terms of biological role, part of the ABC transporter complex MetNIQ involved in methionine import. Responsible for energy coupling to the transport system. The protein is Methionine import ATP-binding protein MetN 2 of Rhodococcus jostii (strain RHA1).